We begin with the raw amino-acid sequence, 487 residues long: Glutamyl-tRNA(Gln) amidotransferase subunit A (487 aa).

Residues lysine 79 and serine 154 each act as charge relay system in the active site. The Acyl-ester intermediate role is filled by serine 178.

This sequence belongs to the amidase family. GatA subfamily. As to quaternary structure, heterotrimer of A, B and C subunits.

The catalysed reaction is L-glutamyl-tRNA(Gln) + L-glutamine + ATP + H2O = L-glutaminyl-tRNA(Gln) + L-glutamate + ADP + phosphate + H(+). Its function is as follows. Allows the formation of correctly charged Gln-tRNA(Gln) through the transamidation of misacylated Glu-tRNA(Gln) in organisms which lack glutaminyl-tRNA synthetase. The reaction takes place in the presence of glutamine and ATP through an activated gamma-phospho-Glu-tRNA(Gln). This is Glutamyl-tRNA(Gln) amidotransferase subunit A from Moorella thermoacetica (strain ATCC 39073 / JCM 9320).